A 516-amino-acid chain; its full sequence is Bifunctional purine biosynthesis protein PurH (516 aa).

The MGS-like domain maps to 1–146 (MTRLALLSVS…KNYAHVTVLS (146 aa)).

It belongs to the PurH family.

It carries out the reaction (6R)-10-formyltetrahydrofolate + 5-amino-1-(5-phospho-beta-D-ribosyl)imidazole-4-carboxamide = 5-formamido-1-(5-phospho-D-ribosyl)imidazole-4-carboxamide + (6S)-5,6,7,8-tetrahydrofolate. The catalysed reaction is IMP + H2O = 5-formamido-1-(5-phospho-D-ribosyl)imidazole-4-carboxamide. It participates in purine metabolism; IMP biosynthesis via de novo pathway; 5-formamido-1-(5-phospho-D-ribosyl)imidazole-4-carboxamide from 5-amino-1-(5-phospho-D-ribosyl)imidazole-4-carboxamide (10-formyl THF route): step 1/1. Its pathway is purine metabolism; IMP biosynthesis via de novo pathway; IMP from 5-formamido-1-(5-phospho-D-ribosyl)imidazole-4-carboxamide: step 1/1. The sequence is that of Bifunctional purine biosynthesis protein PurH from Rippkaea orientalis (strain PCC 8801 / RF-1) (Cyanothece sp. (strain PCC 8801)).